The chain runs to 499 residues: Probable cytosol aminopeptidase (499 aa).

The Mn(2+) site is built by K263 and D268. Residue K275 is part of the active site. 3 residues coordinate Mn(2+): D286, D345, and E347. R349 is an active-site residue.

The protein belongs to the peptidase M17 family. The cofactor is Mn(2+).

The protein resides in the cytoplasm. The enzyme catalyses Release of an N-terminal amino acid, Xaa-|-Yaa-, in which Xaa is preferably Leu, but may be other amino acids including Pro although not Arg or Lys, and Yaa may be Pro. Amino acid amides and methyl esters are also readily hydrolyzed, but rates on arylamides are exceedingly low.. It carries out the reaction Release of an N-terminal amino acid, preferentially leucine, but not glutamic or aspartic acids.. In terms of biological role, presumably involved in the processing and regular turnover of intracellular proteins. Catalyzes the removal of unsubstituted N-terminal amino acids from various peptides. The polypeptide is Probable cytosol aminopeptidase (Chlamydia trachomatis serovar L2 (strain ATCC VR-902B / DSM 19102 / 434/Bu)).